A 382-amino-acid chain; its full sequence is D-galactonate dehydratase 1 (382 aa).

Asp-183 contributes to the Mg(2+) binding site. The Proton donor role is filled by His-185. Mg(2+) is bound by residues Glu-209 and Glu-235. His-285 acts as the Proton acceptor in catalysis.

This sequence belongs to the mandelate racemase/muconate lactonizing enzyme family. GalD subfamily. It depends on Mg(2+) as a cofactor.

It catalyses the reaction D-galactonate = 2-dehydro-3-deoxy-D-galactonate + H2O. Its pathway is carbohydrate acid metabolism; D-galactonate degradation; D-glyceraldehyde 3-phosphate and pyruvate from D-galactonate: step 1/3. Its function is as follows. Catalyzes the dehydration of D-galactonate to 2-keto-3-deoxy-D-galactonate. In Escherichia coli (strain SMS-3-5 / SECEC), this protein is D-galactonate dehydratase 1.